A 441-amino-acid polypeptide reads, in one-letter code: Serine--tRNA ligase (441 aa).

250–252 (TSE) contributes to the L-serine binding site. ATP-binding positions include 281–283 (RRE) and Val297. Glu304 is an L-serine binding site. 368 to 371 (EIVS) is an ATP binding site. Thr402 provides a ligand contact to L-serine.

This sequence belongs to the class-II aminoacyl-tRNA synthetase family. Type-1 seryl-tRNA synthetase subfamily. In terms of assembly, homodimer. The tRNA molecule binds across the dimer.

Its subcellular location is the cytoplasm. The catalysed reaction is tRNA(Ser) + L-serine + ATP = L-seryl-tRNA(Ser) + AMP + diphosphate + H(+). It catalyses the reaction tRNA(Sec) + L-serine + ATP = L-seryl-tRNA(Sec) + AMP + diphosphate + H(+). Its pathway is aminoacyl-tRNA biosynthesis; selenocysteinyl-tRNA(Sec) biosynthesis; L-seryl-tRNA(Sec) from L-serine and tRNA(Sec): step 1/1. Catalyzes the attachment of serine to tRNA(Ser). Is also able to aminoacylate tRNA(Sec) with serine, to form the misacylated tRNA L-seryl-tRNA(Sec), which will be further converted into selenocysteinyl-tRNA(Sec). The chain is Serine--tRNA ligase from Thermoplasma volcanium (strain ATCC 51530 / DSM 4299 / JCM 9571 / NBRC 15438 / GSS1).